The following is a 224-amino-acid chain: Ribose-5-phosphate isomerase A (224 aa).

Substrate-binding positions include T32–T35, D85–D88, and K98–G101. The Proton acceptor role is filled by E107. Residue K125 coordinates substrate.

The protein belongs to the ribose 5-phosphate isomerase family. Homodimer.

It catalyses the reaction aldehydo-D-ribose 5-phosphate = D-ribulose 5-phosphate. The protein operates within carbohydrate degradation; pentose phosphate pathway; D-ribose 5-phosphate from D-ribulose 5-phosphate (non-oxidative stage): step 1/1. Catalyzes the reversible conversion of ribose-5-phosphate to ribulose 5-phosphate. The protein is Ribose-5-phosphate isomerase A of Pseudomonas putida (strain W619).